The primary structure comprises 456 residues: Acyl-CoA transferase FPSE_08120 (456 aa).

The N-terminal 33 residues, 1 to 33 (MARLLFSGQRLRPSFLRSYIRANPSSTPSATRA), are a transit peptide targeting the mitochondrion.

This sequence belongs to the CoA-transferase III family.

Its subcellular location is the mitochondrion. Its function is as follows. Acyl-CoA transferase; part of the Fusarium detoxification of benzoxazolinone cluster involved in the degradation of benzoxazolinones produced by the host plant. Maize, wheat, and rye produce the 2 benzoxazinone phytoanticipins 2,4-dihy-droxy-7-methoxy-1,4-benzoxazin-3-one (DIMBOA) and 2,4-dihydroxy-1,4-benzoxazin-3-one (DIBOA) that, due to their inherent instability once released, spontaneously degrade to the more stable corresponding benzoxazolinones, 6-methoxy-2-benzoxazolinone (MBOA) and 2-benzoxazolinone (BOA), respectively. The first step in the detoxification of benzoxazolinones involves the hydrolysis of the cyclic ester bond of benzoxazolinones by the gamma-lactamase FDB1 to aminophenols. FDB1 is able to convert 2-benzoxazolinone (BOA) into 2-aminophenol (2-AP), as well as 6-methoxy-2-benzoxazolinone (MBOA) into 5-methoxy-2-aminophenol (2-AMP). The N-malonyltransferase FDB2 then metabolizes aminophenols via N-malonylation to non-toxic malonamic acids. FDB2 converts 2-AP into N-(2-hydroxyphenyl) malonamic acid (HPMA) and 2-AMP into N-(2-hydroxy-4-methoxyphenyl) malonamic acid (HMPMA). The cluster also contains 2 transcription factors (FDB3 and FPSE_08121), an aldo-keto reductase (FPSE_08125) that possibly associates with a ketone component of BOA and MBOA degradation, an esterase (FPSE_08126), an acyl-CoA transferase (FPSE_08120), a solute carrier protein (FPSE_08119) and a transmembrane transporter (FPSE_08127) proposed to shuttle metabolites of benzoxazolinone degradation. The chain is Acyl-CoA transferase FPSE_08120 from Fusarium pseudograminearum (strain CS3096) (Wheat and barley crown-rot fungus).